A 213-amino-acid polypeptide reads, in one-letter code: MSERFSPEQQQLLALAAVFEAAQLADDVAQRGDCDSQAFEALIAGVMELDADNFDGVYSQPGLLREGVSLLSRSLSKDSRGANLRPLNYGLALLHLAGKLRNNEDTVSILRNRLLALSGQQAHFDRFSDDAFCHRIAGIYLDTLGTFRFRIQVKGEPAHLQDDNKAARIRALFLAGVRAAFLWHQLGGRRWHLLFQRKRLISVIESIDINGLR.

Belongs to the HflD family.

It localises to the cytoplasm. The protein resides in the cell inner membrane. The chain is High frequency lysogenization protein HflD homolog from Alcanivorax borkumensis (strain ATCC 700651 / DSM 11573 / NCIMB 13689 / SK2).